Reading from the N-terminus, the 932-residue chain is Protocadherin gamma-A7 (932 aa).

The signal sequence occupies residues 1 to 28; it reads MAAQPRGGDCRGFVLLSILLGTPWEAWA. 6 Cadherin domains span residues 29-133, 134-242, 243-347, 348-452, 453-562, and 570-682; these read GRIL…VPRF, LTEE…TPVF, SLPQ…APEV, TMTS…PPTF, PHSS…PPEI, and DGST…EPSD. The Extracellular portion of the chain corresponds to 29-692; the sequence is GRILYSVSEE…GPYNYDLTLY (664 aa). Residues Asn-419 and Asn-545 are each glycosylated (N-linked (GlcNAc...) asparagine). The chain crosses the membrane as a helical span at residues 693–713; sequence LVVAVAAVSCVFLAFVLVLLA. Residues 714–932 are Cytoplasmic-facing; that stretch reads LRLRRWHKSR…KKKSGKKEKK (219 aa). 2 disordered regions span residues 804 to 841 and 902 to 932; these read VPSI…WPNN and ATLT…KEKK. The span at 806 to 841 shows a compositional bias: polar residues; it reads SIQQAPPNTDWRFSQAQRPGTSGSQNGDDTGTWPNN. Residues 922–932 show a composition bias toward basic residues; that stretch reads NKKKSGKKEKK.

Its subcellular location is the cell membrane. Potential calcium-dependent cell-adhesion protein. May be involved in the establishment and maintenance of specific neuronal connections in the brain. This Pan troglodytes (Chimpanzee) protein is Protocadherin gamma-A7 (PCDHGA7).